A 535-amino-acid chain; its full sequence is Zinc finger protein squeeze (535 aa).

2 stretches are compositionally biased toward low complexity: residues 70–97 (MVME…HPPQ) and 131–142 (SSASGSGSNGSS). The tract at residues 70 to 157 (MVMEQQPHPD…RRGDGDQAKP (88 aa)) is disordered. Positions 145-156 (EESRRGDGDQAK) are enriched in basic and acidic residues. 5 consecutive C2H2-type zinc fingers follow at residues 158-180 (YKCG…TRIH), 186-208 (YRCE…IRTH), 214-238 (YKCR…SRCH), 244-266 (FKCN…IPKH), and 275-297 (HICN…LQKH). At Thr-395 the chain carries Phosphothreonine. Phosphoserine is present on residues Ser-399 and Ser-401. Residues 417–475 (TPQHHLQQQQQQQQQQQAQQQQQAQHQPSPGPGNSAFTPLSATVAPPPHLQQHRGPPGS) form a disordered region. A compositionally biased stretch (low complexity) spans 419 to 443 (QHHLQQQQQQQQQQQAQQQQQAQHQ). At Ser-475 the chain carries Phosphoserine. 2 positions are modified to phosphotyrosine: Tyr-479 and Tyr-481.

It belongs to the krueppel C2H2-type zinc-finger protein family. In terms of assembly, interacts with nab; which acts as a coactivator. Interacts with ap. In terms of tissue distribution, largely restricted to subsets of cells in the CNS throughout embryonic and first instar larval (L1) development. Expressed in a population of lateral interneurons, primarily projecting axons in the anterior and posterior commissures. Overlaps with ap within the thoracic ap cluster. By stage 17, it is restricted to 2 neurons within the ap-cluster, with one neuron typically continuing to display higher levels of expression. Selectively expressed at higher levels within the FMRFa Tv neurons. Expressed in all leucokinergic cells.

The protein localises to the nucleus. In terms of biological role, transcription factor involved in neuronal fate specification. First required in embryonic CNS development to define the number of cells that express apterous (ap) in the ap thoracic cluster of interneurons. Later on, it plays a central role in the combinatorial code of transcription factors that specifies the fate of the Tv neuron in the ap cluster by participating in the transcription regulation of FMRFa in Tv cells. Also required for projection neuron dendritic targeting. This is Zinc finger protein squeeze (sqz) from Drosophila melanogaster (Fruit fly).